The chain runs to 579 residues: Nif-specific regulatory protein (579 aa).

The GAF domain maps to 40–187 (DPVAEVPQIF…MVASLLEQAL (148 aa)). The 229-residue stretch at 226-454 (IVGSSPAIAE…LENCVNRAAA (229 aa)) folds into the Sigma-54 factor interaction domain. ATP is bound by residues 254-261 (GESGTGKE) and 317-326 (ADGGTLFLDE). The inter-domain linker stretch occupies residues 464–536 (EELACRQGAC…PLRTKTAQLS (73 aa)). A divalent metal cation-binding residues include cysteine 468 and cysteine 473. Positions 502–529 (RVSAPPPEPAPAPEPAPEAPPREEVPLR) are disordered. 7 tandem repeats follow at residues 505-506 (AP), 507-508 (PP), 509-510 (EP), 511-512 (AP), 513-514 (AP), 515-516 (EP), and 517-518 (AP). A 7 X 2 AA tandem repeats of X-P region spans residues 505–518 (APPPEPAPAPEPAP). Pro residues predominate over residues 505–520 (APPPEPAPAPEPAPEA). Residues 537–579 (REELLRALESAGWVQAKAARLLGMTPRQIAYALQKFEIELRKI) form a C-terminal DNA-binding domain region. Positions 551–570 (QAKAARLLGMTPRQIAYALQ) form a DNA-binding region, H-T-H motif.

Interacts with sigma-54.

Its function is as follows. Required for activation of most nif operons, which are directly involved in nitrogen fixation. This chain is Nif-specific regulatory protein (nifA1), found in Rhodobacter capsulatus (strain ATCC BAA-309 / NBRC 16581 / SB1003).